The chain runs to 529 residues: Peptide chain release factor 3 (529 aa).

The tr-type G domain maps to 10 to 279 (EQRRCFGIIS…ALVEMAPAPG (270 aa)). GTP is bound by residues 19–26 (SHPDAGKT), 87–91 (DTPGH), and 141–144 (NKMD).

This sequence belongs to the TRAFAC class translation factor GTPase superfamily. Classic translation factor GTPase family. PrfC subfamily.

The protein localises to the cytoplasm. In terms of biological role, increases the formation of ribosomal termination complexes and stimulates activities of RF-1 and RF-2. It binds guanine nucleotides and has strong preference for UGA stop codons. It may interact directly with the ribosome. The stimulation of RF-1 and RF-2 is significantly reduced by GTP and GDP, but not by GMP. The chain is Peptide chain release factor 3 from Desulfatibacillum aliphaticivorans.